A 256-amino-acid polypeptide reads, in one-letter code: Probable ABC transporter ATP-binding protein SPy_0285/M5005_Spy0242 (256 aa).

An ABC transporter domain is found at 4-246 (LEINNLHVSI…EKEGYAGIAQ (243 aa)). 36 to 43 (GPNGTGKS) contributes to the ATP binding site.

It belongs to the ABC transporter superfamily. Ycf16 family.

The protein resides in the cell membrane. This Streptococcus pyogenes serotype M1 protein is Probable ABC transporter ATP-binding protein SPy_0285/M5005_Spy0242.